Reading from the N-terminus, the 505-residue chain is Probable cytosol aminopeptidase (505 aa).

Mn(2+) contacts are provided by Lys-269 and Asp-274. Lys-281 is a catalytic residue. Mn(2+)-binding residues include Asp-292, Asp-351, and Glu-353. Arg-355 is an active-site residue.

It belongs to the peptidase M17 family. Mn(2+) serves as cofactor.

It localises to the cytoplasm. It carries out the reaction Release of an N-terminal amino acid, Xaa-|-Yaa-, in which Xaa is preferably Leu, but may be other amino acids including Pro although not Arg or Lys, and Yaa may be Pro. Amino acid amides and methyl esters are also readily hydrolyzed, but rates on arylamides are exceedingly low.. It catalyses the reaction Release of an N-terminal amino acid, preferentially leucine, but not glutamic or aspartic acids.. Its function is as follows. Presumably involved in the processing and regular turnover of intracellular proteins. Catalyzes the removal of unsubstituted N-terminal amino acids from various peptides. This Rhodococcus erythropolis (strain PR4 / NBRC 100887) protein is Probable cytosol aminopeptidase.